A 476-amino-acid polypeptide reads, in one-letter code: Eukaryotic translation initiation factor 3 subunit L (476 aa).

Residues 257 to 452 form the PCI domain; that stretch reads DAIRMFSHIL…DLDYALENDL (196 aa).

This sequence belongs to the eIF-3 subunit L family. In terms of assembly, component of the eukaryotic translation initiation factor 3 (eIF-3) complex.

The protein resides in the cytoplasm. In terms of biological role, component of the eukaryotic translation initiation factor 3 (eIF-3) complex, which is involved in protein synthesis of a specialized repertoire of mRNAs and, together with other initiation factors, stimulates binding of mRNA and methionyl-tRNAi to the 40S ribosome. The eIF-3 complex specifically targets and initiates translation of a subset of mRNAs involved in cell proliferation. In Aspergillus oryzae (strain ATCC 42149 / RIB 40) (Yellow koji mold), this protein is Eukaryotic translation initiation factor 3 subunit L.